The chain runs to 74 residues: Sec-independent protein translocase protein TatA (74 aa).

Residues M1–G21 traverse the membrane as a helical segment. Residues A51–A74 are disordered.

It belongs to the TatA/E family. As to quaternary structure, the Tat system comprises two distinct complexes: a TatABC complex, containing multiple copies of TatA, TatB and TatC subunits, and a separate TatA complex, containing only TatA subunits. Substrates initially bind to the TatABC complex, which probably triggers association of the separate TatA complex to form the active translocon.

It is found in the cell inner membrane. Part of the twin-arginine translocation (Tat) system that transports large folded proteins containing a characteristic twin-arginine motif in their signal peptide across membranes. TatA could form the protein-conducting channel of the Tat system. The polypeptide is Sec-independent protein translocase protein TatA (Haemophilus ducreyi (strain 35000HP / ATCC 700724)).